The chain runs to 501 residues: Cytochrome P450 3A6 (501 aa).

Residue C440 participates in heme binding.

The protein belongs to the cytochrome P450 family. Heme serves as cofactor.

Its subcellular location is the endoplasmic reticulum membrane. It localises to the microsome membrane. It carries out the reaction an organic molecule + reduced [NADPH--hemoprotein reductase] + O2 = an alcohol + oxidized [NADPH--hemoprotein reductase] + H2O + H(+). Exhibits progesterone 6 beta-hydroxylase activity. The chain is Cytochrome P450 3A6 (CYP3A6) from Oryctolagus cuniculus (Rabbit).